The sequence spans 397 residues: Linalool dehydratase/isomerase (397 aa).

The signal sequence occupies residues 1–26; it reads MRFTLKTTAIVSAAALLAGFGPPPRA. Asp-64 functions as the Proton donor/acceptor in the catalytic mechanism. Intrachain disulfides connect Cys-74–Cys-127 and Cys-196–Cys-205. Cys-196 contacts (2E)-geraniol.

Homotetramer. Homopentamer.

Its subcellular location is the periplasm. The catalysed reaction is (S)-linalool = beta-myrcene + H2O. It catalyses the reaction (2E)-geraniol = (S)-linalool. It participates in terpene metabolism; monoterpene degradation. Its activity is regulated as follows. Is inhibited by molecular oxygen, high salt concentrations (NaCl, KCl, or MgCl(2)), urea, and Ti(III)citrate. Activity is not affected by EDTA. Anaerobically catalyzes the stereospecific hydration of beta-myrcene to (3S)-linalool and the isomerization of (3S)-linalool to geraniol. Is thus involved in the initial steps of the anaerobic degradation of the monoterpene beta-myrcene. Also catalyzes the reverse reactions, i.e. the isomerization of geraniol to linalool and the dehydration of linalool to myrcene. In this direction, the formation of myrcene from geraniol may be seen as a detoxification process for the monoterpene alcohol. Shows a relatively broad substrate specificity and can use various geraniol and linalool derivatives. Substrates required a specific alpha-methylallyl alcohol signature motif. Neither the monoterpenes alpha- and beta-ocimene nor the monoterpenoids citronellol and nerol can be used as substrates. The chain is Linalool dehydratase/isomerase from Castellaniella defragrans (strain DSM 12143 / CCUG 39792 / 65Phen) (Alcaligenes defragrans).